Consider the following 132-residue polypeptide: MVMTDPIADMLTRIRNANMVRHEKLEIPASKLKREIAEILKREGFIRDVEFVEDSKQGIIRVFLKYGQNNERVITGLKRISKPGLRVYAKSNEVPRVLNGLGIAIISTSQGVLTDKEARAKQAGGEVLAYVW.

Belongs to the universal ribosomal protein uS8 family. Part of the 30S ribosomal subunit. Contacts proteins S5 and S12.

In terms of biological role, one of the primary rRNA binding proteins, it binds directly to 16S rRNA central domain where it helps coordinate assembly of the platform of the 30S subunit. The polypeptide is Small ribosomal subunit protein uS8 (Bacillus subtilis (strain 168)).